Here is a 127-residue protein sequence, read N- to C-terminus: Small ribosomal subunit protein bS6 (127 aa).

Residues 104–127 (QGAEKGKSSRKEKVAAEAEASEEA) are disordered. The segment covering 107–119 (EKGKSSRKEKVAA) has biased composition (basic and acidic residues).

It belongs to the bacterial ribosomal protein bS6 family.

In terms of biological role, binds together with bS18 to 16S ribosomal RNA. In Coxiella burnetii (strain CbuG_Q212) (Coxiella burnetii (strain Q212)), this protein is Small ribosomal subunit protein bS6.